A 389-amino-acid polypeptide reads, in one-letter code: Lipid-A-disaccharide synthase (389 aa).

Belongs to the LpxB family.

It carries out the reaction a lipid X + a UDP-2-N,3-O-bis[(3R)-3-hydroxyacyl]-alpha-D-glucosamine = a lipid A disaccharide + UDP + H(+). It functions in the pathway bacterial outer membrane biogenesis; LPS lipid A biosynthesis. In terms of biological role, condensation of UDP-2,3-diacylglucosamine and 2,3-diacylglucosamine-1-phosphate to form lipid A disaccharide, a precursor of lipid A, a phosphorylated glycolipid that anchors the lipopolysaccharide to the outer membrane of the cell. This Burkholderia vietnamiensis (strain G4 / LMG 22486) (Burkholderia cepacia (strain R1808)) protein is Lipid-A-disaccharide synthase.